A 207-amino-acid chain; its full sequence is Large ribosomal subunit protein uL4 (207 aa).

The segment at 54 to 76 (RSAVRGGGRKPWRQKGTGRARQG) is disordered. Over residues 60 to 71 (GGRKPWRQKGTG) the composition is skewed to basic residues.

It belongs to the universal ribosomal protein uL4 family. As to quaternary structure, part of the 50S ribosomal subunit.

Its function is as follows. One of the primary rRNA binding proteins, this protein initially binds near the 5'-end of the 23S rRNA. It is important during the early stages of 50S assembly. It makes multiple contacts with different domains of the 23S rRNA in the assembled 50S subunit and ribosome. Functionally, forms part of the polypeptide exit tunnel. The protein is Large ribosomal subunit protein uL4 of Staphylococcus haemolyticus (strain JCSC1435).